A 410-amino-acid polypeptide reads, in one-letter code: Tryptophan synthase beta chain (410 aa).

Residue Lys-100 is modified to N6-(pyridoxal phosphate)lysine.

This sequence belongs to the TrpB family. As to quaternary structure, tetramer of two alpha and two beta chains. It depends on pyridoxal 5'-phosphate as a cofactor.

The enzyme catalyses (1S,2R)-1-C-(indol-3-yl)glycerol 3-phosphate + L-serine = D-glyceraldehyde 3-phosphate + L-tryptophan + H2O. It functions in the pathway amino-acid biosynthesis; L-tryptophan biosynthesis; L-tryptophan from chorismate: step 5/5. Its function is as follows. The beta subunit is responsible for the synthesis of L-tryptophan from indole and L-serine. The polypeptide is Tryptophan synthase beta chain (Pyrobaculum aerophilum (strain ATCC 51768 / DSM 7523 / JCM 9630 / CIP 104966 / NBRC 100827 / IM2)).